A 635-amino-acid polypeptide reads, in one-letter code: Cationic amino acid transporter 2, vacuolar (635 aa).

Residues 1–48 (MGFLVDTQKEGGGHSWGYVRSLVRRKQVDSANGQSHGHQLARALTVPH) lie on the Cytoplasmic side of the membrane. A helical transmembrane segment spans residues 49 to 69 (LVAIGVGATIGAGVYILVGTV). At 70 to 76 (AREHSGP) the chain is on the vacuolar side. A helical membrane pass occupies residues 77-97 (SLALSFLIAGIAAGLSAFCYA). The Cytoplasmic portion of the chain corresponds to 98-108 (ELSSRCPSAGS). A helical transmembrane segment spans residues 109-131 (AYHYSYICVGEGVAWIIGWALIL). Over 132-171 (EYTIGGSAVARGISPNLALIFGGEDGLPAILARHQIPGLD) the chain is Vacuolar. Residues 172 to 192 (IVVDPCAAILVFVVTGLLCMG) form a helical membrane-spanning segment. At 193-200 (IKESTFAQ) the chain is on the cytoplasmic side. A helical transmembrane segment spans residues 201 to 221 (GIVTAVNVCVLLFVIVAGSYL). Topologically, residues 222–235 (GFKTGWPGYELPTG) are vacuolar. A helical transmembrane segment spans residues 236-256 (FFPFGVDGMFAGSATVFFAFI). Residues 257 to 280 (GFDSVASTAEEVRNPQRDLPIGIG) are Cytoplasmic-facing. Residues 281 to 301 (LALLLCCSLYMMVSIVIVGLI) traverse the membrane as a helical segment. Over 302–324 (PYYAMDPDTPISSAFASHDMQWA) the chain is Vacuolar. Residues 325–345 (VYLITLGAVMALCSALMGALL) form a helical membrane-spanning segment. The Cytoplasmic segment spans residues 346-376 (PQPRILMAMARDGLLPSIFSDINKRTQVPVK). Residues 377-397 (ATVATGLCAATLAFFMDVSQL) form a helical membrane-spanning segment. Residue Ala-398 is a topological domain, vacuolar. A helical transmembrane segment spans residues 399–419 (GMVSVGTLLAFTMVAISVLIL). The Cytoplasmic portion of the chain corresponds to 420–493 (RYVPPDEQPL…CLVLSEETRR (74 aa)). A helical membrane pass occupies residues 494–514 (IVAGWSIMFTCVGAFLLSYAA). The Vacuolar portion of the chain corresponds to 515 to 524 (SSLSFPGLIR). A helical membrane pass occupies residues 525–545 (YPLCGVGGCLLLAGLIALSSI). Residues 546-560 (DQDDARHTFGHSGGY) lie on the Cytoplasmic side of the membrane. The chain crosses the membrane as a helical span at residues 561-581 (MCPFVPLLPIICILINMYLLV). The Vacuolar segment spans residues 582–585 (NLGS). The chain crosses the membrane as a helical span at residues 586–606 (ATWARVSVWLLIGVIVYVFYG). Over 607 to 635 (RKNSSLANAVYVTTAHAEEIYREHEGSLA) the chain is Cytoplasmic.

Belongs to the amino acid-polyamine-organocation (APC) superfamily. Cationic amino acid transporter (CAT) (TC 2.A.3.3) family. As to expression, expressed in roots, stems, flowers, leaves, and siliques.

Its subcellular location is the vacuole membrane. Its function is as follows. Permease involved in the transport of the cationic amino acids. This is Cationic amino acid transporter 2, vacuolar (CAT2) from Arabidopsis thaliana (Mouse-ear cress).